A 254-amino-acid chain; its full sequence is Uracil-DNA glycosylase (254 aa).

The active-site Proton acceptor is the Asp72. Residues 111–136 are insert; sequence SLGDSASEQGALDLGINAPGSVAGTQ.

It belongs to the uracil-DNA glycosylase (UDG) superfamily. UNG family.

The protein localises to the cytoplasm. It catalyses the reaction Hydrolyzes single-stranded DNA or mismatched double-stranded DNA and polynucleotides, releasing free uracil.. Its function is as follows. Excises uracil residues from the DNA which can arise as a result of misincorporation of dUMP residues by DNA polymerase or due to deamination of cytosine. This chain is Uracil-DNA glycosylase (ung), found in Corynebacterium glutamicum (strain ATCC 13032 / DSM 20300 / JCM 1318 / BCRC 11384 / CCUG 27702 / LMG 3730 / NBRC 12168 / NCIMB 10025 / NRRL B-2784 / 534).